The following is a 178-amino-acid chain: Sec-independent protein translocase protein TatB (178 aa).

Residues 1 to 21 form a helical membrane-spanning segment; it reads MFDIGWSELLVIGVVALIAIG. The tract at residues 146 to 178 is disordered; that stretch reads LAIVREIKPEPQPQPADGAAPAEPERLKDAKAS. The span at 168-178 shows a compositional bias: basic and acidic residues; it reads EPERLKDAKAS.

Belongs to the TatB family. In terms of assembly, the Tat system comprises two distinct complexes: a TatABC complex, containing multiple copies of TatA, TatB and TatC subunits, and a separate TatA complex, containing only TatA subunits. Substrates initially bind to the TatABC complex, which probably triggers association of the separate TatA complex to form the active translocon.

The protein resides in the cell inner membrane. Functionally, part of the twin-arginine translocation (Tat) system that transports large folded proteins containing a characteristic twin-arginine motif in their signal peptide across membranes. Together with TatC, TatB is part of a receptor directly interacting with Tat signal peptides. TatB may form an oligomeric binding site that transiently accommodates folded Tat precursor proteins before their translocation. The protein is Sec-independent protein translocase protein TatB of Bradyrhizobium sp. (strain ORS 278).